The primary structure comprises 295 residues: Probable cell division protein WhiA (295 aa).

A DNA-binding region (H-T-H motif) is located at residues Ser-262–Asp-293.

It belongs to the WhiA family.

Functionally, involved in cell division and chromosome segregation. This Thermotoga maritima (strain ATCC 43589 / DSM 3109 / JCM 10099 / NBRC 100826 / MSB8) protein is Probable cell division protein WhiA.